Here is a 55-residue protein sequence, read N- to C-terminus: UPF0291 protein CA_C2726 (55 aa).

The protein belongs to the UPF0291 family.

It localises to the cytoplasm. The polypeptide is UPF0291 protein CA_C2726 (Clostridium acetobutylicum (strain ATCC 824 / DSM 792 / JCM 1419 / IAM 19013 / LMG 5710 / NBRC 13948 / NRRL B-527 / VKM B-1787 / 2291 / W)).